Consider the following 682-residue polypeptide: MGTQRSMFIVSFLFKLFLFLSVHVRAQRTTTNFAFRGFNGNQSKIRIEGAAMIKPDGLLRLTDRKSNVTGTAFYHKPVRLLNRNSTNVTIRSFSTSFVFVIIPSSSSNKGFGFTFTLSPTPYRLNAGSAQYLGVFNKENNGDPRNHVFAVEFDTVQGSRDDNTDRIGNDIGLNYNSRTSDLQEPVVYYNNDDHNKKEDFQLESGNPIQALLEYDGATQMLNVTVYPARLGFKPTKPLISQHVPKLLEIVQEEMYVGFTASTGKGQSSAHYVMGWSFSSGGERPIADVLILSELPPPPPNKAKKEGLNSQVIVMIVALSAVMLVMLVLLFFFVMYKKRLGQEETLEDWEIDHPRRLRYRDLYVATDGFKKTGIIGTGGFGTVFKGKLPNSDPIAVKKIIPSSRQGVREFVAEIESLGKLRHKNLVNLQGWCKHKNDLLLIYDYIPNGSLDSLLYTVPRRSGAVLSWNARFQIAKGIASGLLYLHEEWEKIVIHRDVKPSNVLIDSKMNPRLGDFGLARLYERGTLSETTALVGTIGYMAPELSRNGNPSSASDVFAFGVLLLEIVCGRKPTDSGTFFLVDWVMELHANGEILSAIDPRLGSGYDGGEARLALAVGLLCCHQKPASRPSMRIVLRYLNGEENVPEIDDEWGYSKSSRSEFGSKLVGYVSSTSITRVSSTSRISQ.

Positions 1 to 26 (MGTQRSMFIVSFLFKLFLFLSVHVRA) are cleaved as a signal peptide. The Extracellular portion of the chain corresponds to 27–310 (QRTTTNFAFR…AKKEGLNSQV (284 aa)). The tract at residues 29–277 (TTTNFAFRGF…AHYVMGWSFS (249 aa)) is legume-lectin like. Residues 311-331 (IVMIVALSAVMLVMLVLLFFF) traverse the membrane as a helical segment. At 332–682 (VMYKKRLGQE…RVSSTSRISQ (351 aa)) the chain is on the cytoplasmic side. A Protein kinase domain is found at 367–641 (FKKTGIIGTG…LRYLNGEENV (275 aa)). ATP contacts are provided by residues 373–381 (IGTGGFGTV) and lysine 395. The active-site Proton acceptor is the aspartate 494.

It in the C-terminal section; belongs to the protein kinase superfamily. Ser/Thr protein kinase family. In the N-terminal section; belongs to the leguminous lectin family. In terms of tissue distribution, strongly expressed in the vascular system and trichomes of the leaves. Also expressed in guard cells, anthers, stigmas and germinating seeds, but not found in petals or roots. Increased susceptibility to the bacteria Pseudomonas syringae, characterized by stronger necrotic symptoms and higher bacterial proliferation.

Its subcellular location is the cell membrane. It carries out the reaction L-seryl-[protein] + ATP = O-phospho-L-seryl-[protein] + ADP + H(+). The catalysed reaction is L-threonyl-[protein] + ATP = O-phospho-L-threonyl-[protein] + ADP + H(+). Its function is as follows. Involved in negative regulation of abscisic acid response in seed germination. In terms of biological role, involved in resistance response to the pathogenic bacteria Pseudomonas syringae. The protein is L-type lectin-domain containing receptor kinase VI.2 of Arabidopsis thaliana (Mouse-ear cress).